Consider the following 598-residue polypeptide: Elongation factor 4 (598 aa).

One can recognise a tr-type G domain in the interval 5-187 (SHIRNFSIIA…RLVATIPAPT (183 aa)). GTP contacts are provided by residues 17 to 22 (DHGKST) and 134 to 137 (NKMD).

It belongs to the TRAFAC class translation factor GTPase superfamily. Classic translation factor GTPase family. LepA subfamily.

It localises to the cell inner membrane. The catalysed reaction is GTP + H2O = GDP + phosphate + H(+). In terms of biological role, required for accurate and efficient protein synthesis under certain stress conditions. May act as a fidelity factor of the translation reaction, by catalyzing a one-codon backward translocation of tRNAs on improperly translocated ribosomes. Back-translocation proceeds from a post-translocation (POST) complex to a pre-translocation (PRE) complex, thus giving elongation factor G a second chance to translocate the tRNAs correctly. Binds to ribosomes in a GTP-dependent manner. This is Elongation factor 4 from Pseudomonas syringae pv. syringae (strain B728a).